Consider the following 352-residue polypeptide: 4-hydroxy-3-methylbut-2-en-1-yl diphosphate synthase (flavodoxin) (352 aa).

4 residues coordinate [4Fe-4S] cluster: Cys-265, Cys-268, Cys-300, and Glu-307.

It belongs to the IspG family. [4Fe-4S] cluster serves as cofactor.

It catalyses the reaction (2E)-4-hydroxy-3-methylbut-2-enyl diphosphate + oxidized [flavodoxin] + H2O + 2 H(+) = 2-C-methyl-D-erythritol 2,4-cyclic diphosphate + reduced [flavodoxin]. It participates in isoprenoid biosynthesis; isopentenyl diphosphate biosynthesis via DXP pathway; isopentenyl diphosphate from 1-deoxy-D-xylulose 5-phosphate: step 5/6. Functionally, converts 2C-methyl-D-erythritol 2,4-cyclodiphosphate (ME-2,4cPP) into 1-hydroxy-2-methyl-2-(E)-butenyl 4-diphosphate. The polypeptide is 4-hydroxy-3-methylbut-2-en-1-yl diphosphate synthase (flavodoxin) (Persephonella marina (strain DSM 14350 / EX-H1)).